The sequence spans 184 residues: ATP synthase subunit b (184 aa).

A helical transmembrane segment spans residues 24–44; the sequence is ILVVVVGFALLMFIVIKFIVP.

Belongs to the ATPase B chain family. F-type ATPases have 2 components, F(1) - the catalytic core - and F(0) - the membrane proton channel. F(1) has five subunits: alpha(3), beta(3), gamma(1), delta(1), epsilon(1). F(0) has three main subunits: a(1), b(2) and c(10-14). The alpha and beta chains form an alternating ring which encloses part of the gamma chain. F(1) is attached to F(0) by a central stalk formed by the gamma and epsilon chains, while a peripheral stalk is formed by the delta and b chains.

Its subcellular location is the cell membrane. In terms of biological role, f(1)F(0) ATP synthase produces ATP from ADP in the presence of a proton or sodium gradient. F-type ATPases consist of two structural domains, F(1) containing the extramembraneous catalytic core and F(0) containing the membrane proton channel, linked together by a central stalk and a peripheral stalk. During catalysis, ATP synthesis in the catalytic domain of F(1) is coupled via a rotary mechanism of the central stalk subunits to proton translocation. Component of the F(0) channel, it forms part of the peripheral stalk, linking F(1) to F(0). The sequence is that of ATP synthase subunit b (atpF) from Micrococcus luteus (strain ATCC 4698 / DSM 20030 / JCM 1464 / CCM 169 / CCUG 5858 / IAM 1056 / NBRC 3333 / NCIMB 9278 / NCTC 2665 / VKM Ac-2230) (Micrococcus lysodeikticus).